Consider the following 279-residue polypeptide: Movement protein (279 aa).

Belongs to the cucumovirus movement protein family.

Its subcellular location is the host cell junction. It is found in the host plasmodesma. In terms of biological role, transports viral genome to neighboring plant cells directly through plasmosdesmata, without any budding. The movement protein allows efficient cell to cell propagation, by bypassing the host cell wall barrier. Acts by forming a tubular structure at the host plasmodesmata, enlarging it enough to allow free passage of virion capsids. The chain is Movement protein from Cucumber mosaic virus (strain C7-2) (CMV).